Consider the following 449-residue polypeptide: UDP-N-acetylmuramate--L-alanine ligase (449 aa).

Position 121–127 (121–127 (GAHGKSS)) interacts with ATP.

It belongs to the MurCDEF family.

The protein localises to the cytoplasm. The catalysed reaction is UDP-N-acetyl-alpha-D-muramate + L-alanine + ATP = UDP-N-acetyl-alpha-D-muramoyl-L-alanine + ADP + phosphate + H(+). Its pathway is cell wall biogenesis; peptidoglycan biosynthesis. Its function is as follows. Cell wall formation. The sequence is that of UDP-N-acetylmuramate--L-alanine ligase from Helicobacter pylori (strain P12).